We begin with the raw amino-acid sequence, 807 residues long: Anaphase-promoting complex subunit 4 (807 aa).

A Phosphotyrosine modification is found at Y469. A disordered region spans residues 755 to 788 (DESSDDEEEAGGKPVKIKEEVLSESETEAHQDAA). Phosphoserine occurs at positions 757 and 758. Basic and acidic residues predominate over residues 770–785 (KIKEEVLSESETEAHQ). K772 participates in a covalent cross-link: Glycyl lysine isopeptide (Lys-Gly) (interchain with G-Cter in SUMO2). 2 positions are modified to phosphoserine: S777 and S779. Residue K797 forms a Glycyl lysine isopeptide (Lys-Gly) (interchain with G-Cter in SUMO2) linkage.

It belongs to the APC4 family. The mammalian APC/C is composed at least of 14 distinct subunits ANAPC1, ANAPC2, CDC27/APC3, ANAPC4, ANAPC5, CDC16/APC6, ANAPC7, CDC23/APC8, ANAPC10, ANAPC11, CDC26/APC12, ANAPC13, ANAPC15 and ANAPC16 that assemble into a complex of at least 19 chains with a combined molecular mass of around 1.2 MDa; APC/C interacts with FZR1 and FBXO5. In the context of the APC/C complex, directly interacts with UBE2S. Interacts with FBXO43.

The protein resides in the nucleus. It functions in the pathway protein modification; protein ubiquitination. In terms of biological role, component of the anaphase promoting complex/cyclosome (APC/C), a cell cycle-regulated E3 ubiquitin ligase that controls progression through mitosis and the G1 phase of the cell cycle. The APC/C complex acts by mediating ubiquitination and subsequent degradation of target proteins: it mainly mediates the formation of 'Lys-11'-linked polyubiquitin chains and, to a lower extent, the formation of 'Lys-48'- and 'Lys-63'-linked polyubiquitin chains. The APC/C complex catalyzes assembly of branched 'Lys-11'-/'Lys-48'-linked branched ubiquitin chains on target proteins. The chain is Anaphase-promoting complex subunit 4 (Anapc4) from Mus musculus (Mouse).